A 272-amino-acid polypeptide reads, in one-letter code: Probable ribonuclease HI_0526 (272 aa).

The N-terminal stretch at 1–23 (MKKLTSILSLIVLVILAIWQYFT) is a signal peptide. Catalysis depends on residues His148, Glu195, and His199.

Belongs to the RNase T2 family.

The sequence is that of Probable ribonuclease HI_0526 from Haemophilus influenzae (strain ATCC 51907 / DSM 11121 / KW20 / Rd).